We begin with the raw amino-acid sequence, 641 residues long: Threonine--tRNA ligase (641 aa).

In terms of domain architecture, TGS spans 1 to 61 (MPAITLPDGS…DDDVQLEIVT (61 aa)). The segment at 242-533 (DHRRIGRAQN…LIEHYAGALP (292 aa)) is catalytic. Zn(2+) contacts are provided by cysteine 333, histidine 384, and histidine 510.

This sequence belongs to the class-II aminoacyl-tRNA synthetase family. As to quaternary structure, homodimer. It depends on Zn(2+) as a cofactor.

It is found in the cytoplasm. It catalyses the reaction tRNA(Thr) + L-threonine + ATP = L-threonyl-tRNA(Thr) + AMP + diphosphate + H(+). Catalyzes the attachment of threonine to tRNA(Thr) in a two-step reaction: L-threonine is first activated by ATP to form Thr-AMP and then transferred to the acceptor end of tRNA(Thr). Also edits incorrectly charged L-seryl-tRNA(Thr). This chain is Threonine--tRNA ligase, found in Alkalilimnicola ehrlichii (strain ATCC BAA-1101 / DSM 17681 / MLHE-1).